Here is an 872-residue protein sequence, read N- to C-terminus: Alanine--tRNA ligase (872 aa).

Positions 567, 571, 669, and 673 each coordinate Zn(2+).

The protein belongs to the class-II aminoacyl-tRNA synthetase family. It depends on Zn(2+) as a cofactor.

It localises to the cytoplasm. It catalyses the reaction tRNA(Ala) + L-alanine + ATP = L-alanyl-tRNA(Ala) + AMP + diphosphate. Its function is as follows. Catalyzes the attachment of alanine to tRNA(Ala) in a two-step reaction: alanine is first activated by ATP to form Ala-AMP and then transferred to the acceptor end of tRNA(Ala). Also edits incorrectly charged Ser-tRNA(Ala) and Gly-tRNA(Ala) via its editing domain. In Streptococcus pneumoniae serotype 2 (strain D39 / NCTC 7466), this protein is Alanine--tRNA ligase.